A 277-amino-acid polypeptide reads, in one-letter code: Coiled-coil domain-containing protein 117 (277 aa).

Positions 22–69 (SPPAFAGRAFPPGAAGHDLAPRPGVRGPPSSPDGRTARGRVSIHCRKK) are disordered. A compositionally biased stretch (low complexity) spans 23–55 (PPAFAGRAFPPGAAGHDLAPRPGVRGPPSSPDG). At arginine 47 the chain carries Omega-N-methylarginine. Serine 52 is modified (phosphoserine). The span at 58-69 (ARGRVSIHCRKK) shows a compositional bias: basic residues. Residues 139 to 166 (QCEVARRRLQEIEDRIIDEDEEVESDRN) adopt a coiled-coil conformation. 2 disordered regions span residues 216 to 242 (LSEK…ATGT) and 255 to 277 (QCTD…EMEL). Over residues 225 to 242 (NPKNYMGESQTKHTATGT) the composition is skewed to polar residues.

As to quaternary structure, interacts with CIAO2B; the interaction is direct. Interacts with MMS19; the interaction is indirect.

It is found in the cytoplasm. The protein localises to the cytoskeleton. The protein resides in the spindle. Its subcellular location is the nucleus. Facilitates DNA repair, cell cycle progression, and cell proliferation through its interaction with CIAO2B. In Rattus norvegicus (Rat), this protein is Coiled-coil domain-containing protein 117.